A 282-amino-acid polypeptide reads, in one-letter code: NADPH-dependent 7-cyano-7-deazaguanine reductase (282 aa).

Substrate is bound at residue 88 to 90; that stretch reads IES. 90–91 contacts NADPH; the sequence is SK. Catalysis depends on Cys190, which acts as the Thioimide intermediate. The active-site Proton donor is Asp197. Residue 229–230 participates in substrate binding; sequence HE. An NADPH-binding site is contributed by 258–259; the sequence is RG.

The protein belongs to the GTP cyclohydrolase I family. QueF type 2 subfamily. As to quaternary structure, homodimer.

Its subcellular location is the cytoplasm. It carries out the reaction 7-aminomethyl-7-carbaguanine + 2 NADP(+) = 7-cyano-7-deazaguanine + 2 NADPH + 3 H(+). Its pathway is tRNA modification; tRNA-queuosine biosynthesis. Catalyzes the NADPH-dependent reduction of 7-cyano-7-deazaguanine (preQ0) to 7-aminomethyl-7-deazaguanine (preQ1). This is NADPH-dependent 7-cyano-7-deazaguanine reductase from Shigella dysenteriae serotype 1 (strain Sd197).